A 435-amino-acid polypeptide reads, in one-letter code: Cysteine--tRNA ligase (435 aa).

C24 serves as a coordination point for Zn(2+). A 'HIGH' region motif is present at residues 26–36 (PTVYDHIHIGN). Residues C202, H228, and E232 each coordinate Zn(2+). The 'KMSKS' region motif lies at 260-264 (KMSKS). ATP is bound at residue K263.

Belongs to the class-I aminoacyl-tRNA synthetase family. Monomer. The cofactor is Zn(2+).

Its subcellular location is the cytoplasm. It catalyses the reaction tRNA(Cys) + L-cysteine + ATP = L-cysteinyl-tRNA(Cys) + AMP + diphosphate. The sequence is that of Cysteine--tRNA ligase from Mycoplasmoides gallisepticum (strain R(low / passage 15 / clone 2)) (Mycoplasma gallisepticum).